The following is a 594-amino-acid chain: APOBEC1 complementation factor (594 aa).

RRM domains are found at residues 56 to 134, 136 to 218, and 231 to 303; these read CEIF…ASVD, CRLF…WAEP, and KILY…LAKP. The required for nuclear localization stretch occupies residues 360–409; it reads HFPATKGHLSNRAIIRAPSVREIYMNVPVGAAGVRGLGGRGYLAYTGLGR. Thr499 carries the post-translational modification Phosphothreonine.

Part of the apolipoprotein B mRNA editing complex with APOBEC1. Interacts with TNPO2; TNPO2 may be responsible for transport of A1CF into the nucleus. Interacts with SYNCRIP. Interacts with CELF2/CUGBP2. Interacts with RBM47. Widely expressed with highest levels in brain, liver, pancreas, colon and spleen.

Its subcellular location is the nucleus. It is found in the endoplasmic reticulum. The protein localises to the cytoplasm. Its function is as follows. Essential component of the apolipoprotein B mRNA editing enzyme complex which is responsible for the postranscriptional editing of a CAA codon for Gln to a UAA codon for stop in APOB mRNA. Binds to APOB mRNA and is probably responsible for docking the catalytic subunit, APOBEC1, to the mRNA to allow it to deaminate its target cytosine. The complex also protects the edited APOB mRNA from nonsense-mediated decay. The protein is APOBEC1 complementation factor (A1CF) of Homo sapiens (Human).